Here is a 457-residue protein sequence, read N- to C-terminus: Ribosome biogenesis protein YTM1 (457 aa).

The ubiquitin-like (UBL) domain stretch occupies residues 8-89; the sequence is VKVKFFTREK…ETTLTVEYTR (82 aa). A sufficient for interaction with ERB1 and association with 66S pre-ribosomes region spans residues 99 to 457; sequence NFNNDDWVSA…INKGDNIFKN (359 aa). WD repeat units follow at residues 101–140, 142–180, 203–241, 282–322, 324–363, 370–410, and 421–457; these read NNDD…EKQY, GHTG…GSVS, GHKA…MTAI, SHTG…CIDT, TTSY…SAKI, GHKN…PMYT, and GVND…IFKN. Residues 172–191 form a disordered region; that stretch reads TKNDDGSVSNNTGDENDEEN.

This sequence belongs to the WD repeat WDR12/YTM1 family. In terms of assembly, component of the NOP7 complex, composed of ERB1, NOP7 and YTM1. The complex is held together by ERB1, which interacts with NOP7 via its N-terminal domain and with YTM1 via a high-affinity interaction between the seven-bladed beta-propeller domains of the 2 proteins. The NOP7 complex associates with the 66S pre-ribosome. Interacts (via UBL domain) with MDN1 (via VWFA/MIDAS domain).

It localises to the nucleus. It is found in the nucleolus. Its subcellular location is the nucleoplasm. In terms of biological role, component of the NOP7 complex, which is required for maturation of the 25S and 5.8S ribosomal RNAs and formation of the 60S ribosome. This Candida glabrata (strain ATCC 2001 / BCRC 20586 / JCM 3761 / NBRC 0622 / NRRL Y-65 / CBS 138) (Yeast) protein is Ribosome biogenesis protein YTM1.